A 474-amino-acid polypeptide reads, in one-letter code: Trigger factor (474 aa).

One can recognise a PPIase FKBP-type domain in the interval 165 to 250 (GDRVTIDYLG…VKTVSKPDEL (86 aa)). The span at 451 to 467 (VKKKTASDNKKSNEIKK) shows a compositional bias: basic and acidic residues. A disordered region spans residues 451–474 (VKKKTASDNKKSNEIKKKSTMKKV).

This sequence belongs to the FKBP-type PPIase family. Tig subfamily.

The protein resides in the cytoplasm. It carries out the reaction [protein]-peptidylproline (omega=180) = [protein]-peptidylproline (omega=0). Functionally, involved in protein export. Acts as a chaperone by maintaining the newly synthesized protein in an open conformation. Functions as a peptidyl-prolyl cis-trans isomerase. This chain is Trigger factor, found in Bartonella bacilliformis (strain ATCC 35685 / KC583 / Herrer 020/F12,63).